The chain runs to 204 residues: Heart- and neural crest derivatives-expressed protein 1 (204 aa).

3 disordered regions span residues 1 to 24 (MNLVGSYAHHHHHHHHHHHPHPAH), 57 to 115 (APDF…RTES), and 172 to 204 (LKKADGGRESKRKRELQQHEGFPPALGPGEKRD). Basic residues-rich tracts occupy residues 8–22 (AHHHHHHHHHHHPHP) and 98–110 (LGRRKGSGPKKER). A bHLH domain is found at 100-152 (RRKGSGPKKERRRTESINSAFAELRECIPNVPADTKLSKIKTLRLATSYIAYL). A Phosphothreonine; by PLK4 modification is found at Thr113. Ser115 carries the phosphoserine; by PLK4 modification.

In terms of assembly, efficient DNA binding requires dimerization with another bHLH protein. Forms homodimers and heterodimers with TCF3 gene products E12 and E47, HAND2 and HEY1, HEY2 and HEYL (hairy-related transcription factors). Interacts with MDFIC. Interacts with SOX15; the interaction enhances HAND1-induced differentiation of trophoblast giant cells. Phosphorylation by PLK4 disrupts the interaction with MDFIC and leads to translocation into the nucleoplasm, allowing dimerization and transcription factor activity.

It is found in the nucleus. The protein resides in the nucleoplasm. The protein localises to the nucleolus. Transcription factor that plays an essential role in both trophoblast giant cell differentiation and in cardiac morphogenesis. Binds the DNA sequence 5'-NRTCTG-3' (non-canonical E-box). Acts as a transcriptional repressor of SOX15. In the adult, could be required for ongoing expression of cardiac-specific genes. The protein is Heart- and neural crest derivatives-expressed protein 1 (HAND1) of Ovis aries (Sheep).